The sequence spans 676 residues: Kojibiose hydrolase (676 aa).

A signal peptide spans 1–20; it reads MNKGIIQLLALSLFCISVKA. Catalysis depends on Glu469, which acts as the Proton donor. Residue Glu613 is the Proton acceptor of the active site.

It belongs to the glycosyl hydrolase 65 family.

It catalyses the reaction kojibiose + H2O = beta-D-glucose + D-glucose. Functionally, glycosidase that specifically hydrolyzes kojibiose to beta-glucose and glucose. Besides its activity on kojibiose, is also able to act on alpha-1,2-oligoglucans with a higher degree of polymerization. Shows weak activity on nigerose, but is not capable of breaking down trehalose, maltose, isomaltose, sucrose, isomaltulose, turanose or melezitose. This chain is Kojibiose hydrolase, found in Mucilaginibacter mallensis.